The following is a 450-amino-acid chain: Phosphoglucosamine mutase 2 (450 aa).

Catalysis depends on S101, which acts as the Phosphoserine intermediate. Mg(2+) is bound by residues S101, D245, D247, and D249. A Phosphoserine modification is found at S101.

It belongs to the phosphohexose mutase family. It depends on Mg(2+) as a cofactor. Activated by phosphorylation.

The enzyme catalyses alpha-D-glucosamine 1-phosphate = D-glucosamine 6-phosphate. Functionally, catalyzes the conversion of glucosamine-6-phosphate to glucosamine-1-phosphate. This is Phosphoglucosamine mutase 2 from Shewanella baltica (strain OS185).